We begin with the raw amino-acid sequence, 142 residues long: Hemoglobin subunit zeta (142 aa).

At serine 2 the chain carries N-acetylserine. A Globin domain is found at 2 to 142 (SLTRTERTII…VSGVLTEKYR (141 aa)). The residue at position 29 (threonine 29) is a Phosphothreonine. Serine 53 carries the post-translational modification Phosphoserine. Histidine 59 serves as a coordination point for heme b. Phosphoserine is present on residues serine 73 and serine 82. Histidine 88 contributes to the heme b binding site.

It belongs to the globin family. As to quaternary structure, heterotetramer of two zeta chains and beta-type chains.

In terms of biological role, the zeta chain is an alpha-type chain of mammalian embryonic hemoglobin. The polypeptide is Hemoglobin subunit zeta (HBZ1) (Capra hircus (Goat)).